Reading from the N-terminus, the 957-residue chain is Protein translocase subunit SecA (957 aa).

Residues Gln-86, 104–108 (GEGKT), and Asp-494 contribute to the ATP site. The segment covering 929–947 (SRPAPAPTAAASPDPSSAS) has biased composition (low complexity). Residues 929–957 (SRPAPAPTAAASPDPSSASGVVEADFTEE) form a disordered region.

Belongs to the SecA family. In terms of assembly, monomer and homodimer. Part of the essential Sec protein translocation apparatus which comprises SecA, SecYEG and auxiliary proteins SecDF. Other proteins may also be involved.

It is found in the cell inner membrane. Its subcellular location is the cellular thylakoid membrane. The protein resides in the cytoplasm. The enzyme catalyses ATP + H2O + cellular proteinSide 1 = ADP + phosphate + cellular proteinSide 2.. Part of the Sec protein translocase complex. Interacts with the SecYEG preprotein conducting channel. Has a central role in coupling the hydrolysis of ATP to the transfer of proteins into and across the cell membrane, serving as an ATP-driven molecular motor driving the stepwise translocation of polypeptide chains across the membrane. In terms of biological role, probably participates in protein translocation into and across both the cytoplasmic and thylakoid membranes in cyanobacterial cells. In Synechococcus sp. (strain JA-2-3B'a(2-13)) (Cyanobacteria bacterium Yellowstone B-Prime), this protein is Protein translocase subunit SecA.